Consider the following 144-residue polypeptide: Large ribosomal subunit protein uL16 (144 aa).

It belongs to the universal ribosomal protein uL16 family. As to quaternary structure, part of the 50S ribosomal subunit.

Binds 23S rRNA and is also seen to make contacts with the A and possibly P site tRNAs. This chain is Large ribosomal subunit protein uL16, found in Novosphingobium aromaticivorans (strain ATCC 700278 / DSM 12444 / CCUG 56034 / CIP 105152 / NBRC 16084 / F199).